Here is a 195-residue protein sequence, read N- to C-terminus: Proteasome subunit beta 1 (195 aa).

Residues 1–6 (MEELPA) constitute a propeptide, removed in mature form; by autocatalysis. The active-site Nucleophile is the T7.

The protein belongs to the peptidase T1B family. In terms of assembly, the 20S proteasome core is composed of 14 alpha and 14 beta subunits that assemble into four stacked heptameric rings, resulting in a barrel-shaped structure. The two inner rings, each composed of seven catalytic beta subunits, are sandwiched by two outer rings, each composed of seven alpha subunits. The catalytic chamber with the active sites is on the inside of the barrel. Has a gated structure, the ends of the cylinder being occluded by the N-termini of the alpha-subunits. Is capped at one or both ends by the proteasome regulatory ATPase, PAN.

Its subcellular location is the cytoplasm. It carries out the reaction Cleavage of peptide bonds with very broad specificity.. With respect to regulation, the formation of the proteasomal ATPase PAN-20S proteasome complex, via the docking of the C-termini of PAN into the intersubunit pockets in the alpha-rings, triggers opening of the gate for substrate entry. Interconversion between the open-gate and close-gate conformations leads to a dynamic regulation of the 20S proteasome proteolysis activity. Component of the proteasome core, a large protease complex with broad specificity involved in protein degradation. The polypeptide is Proteasome subunit beta 1 (Sulfolobus acidocaldarius (strain ATCC 33909 / DSM 639 / JCM 8929 / NBRC 15157 / NCIMB 11770)).